Consider the following 522-residue polypeptide: N-acetylgalactosamine-6-sulfatase (522 aa).

A signal peptide spans 1-25 (MAPVAAATGWRLLLVLSAAGLGAAG). Residues 27–379 (PQPPNILLLL…PAMLGGQLTD (353 aa)) form a catalytic domain region. Residues aspartate 38, aspartate 39, and cysteine 78 each coordinate Ca(2+). The active-site Nucleophile is the cysteine 78. 3-oxoalanine (Cys) is present on cysteine 78. Residue histidine 141 is part of the active site. N-linked (GlcNAc...) asparagine glycosylation occurs at asparagine 203. Ca(2+)-binding residues include aspartate 288 and asparagine 289. An intrachain disulfide couples cysteine 308 to cysteine 419. A glycan (N-linked (GlcNAc...) asparagine) is linked at asparagine 423. 2 disulfide bridges follow: cysteine 489/cysteine 518 and cysteine 501/cysteine 507.

It belongs to the sulfatase family. Homodimer. Ca(2+) is required as a cofactor. The conversion to 3-oxoalanine (also known as C-formylglycine, FGly), of a serine or cysteine residue in prokaryotes and of a cysteine residue in eukaryotes, is critical for catalytic activity.

Its subcellular location is the lysosome. It catalyses the reaction Hydrolysis of the 6-sulfate groups of the N-acetyl-D-galactosamine 6-sulfate units of chondroitin sulfate and of the D-galactose 6-sulfate units of keratan sulfate.. The protein is N-acetylgalactosamine-6-sulfatase (GALNS) of Canis lupus familiaris (Dog).